Consider the following 161-residue polypeptide: Cyclic pyranopterin monophosphate synthase (161 aa).

Substrate contacts are provided by residues leucine 75–histidine 77 and methionine 113–glutamate 114. The active site involves aspartate 128.

It belongs to the MoaC family. In terms of assembly, homohexamer; trimer of dimers.

The catalysed reaction is (8S)-3',8-cyclo-7,8-dihydroguanosine 5'-triphosphate = cyclic pyranopterin phosphate + diphosphate. It functions in the pathway cofactor biosynthesis; molybdopterin biosynthesis. Functionally, catalyzes the conversion of (8S)-3',8-cyclo-7,8-dihydroguanosine 5'-triphosphate to cyclic pyranopterin monophosphate (cPMP). This chain is Cyclic pyranopterin monophosphate synthase, found in Salmonella typhi.